Here is a 322-residue protein sequence, read N- to C-terminus: Cytochrome c biogenesis protein CcsA (322 aa).

7 helical membrane-spanning segments follow: residues 9–29, 44–64, 68–88, 143–163, 226–246, 260–274, and 289–309; these read ILTH…LITL, GMIV…VSSG, LSNL…LHTI, MLLS…ILII, IISL…VWAN, TWAF…IYLH, and IASI…LLGI.

This sequence belongs to the CcmF/CycK/Ccl1/NrfE/CcsA family. In terms of assembly, may interact with Ccs1.

It localises to the plastid. It is found in the chloroplast thylakoid membrane. Required during biogenesis of c-type cytochromes (cytochrome c6 and cytochrome f) at the step of heme attachment. This chain is Cytochrome c biogenesis protein CcsA, found in Hordeum vulgare (Barley).